The primary structure comprises 596 residues: Estrogen receptor (596 aa).

A modulating (transactivation AF-1); mediates interaction with MACROD1 region spans residues 1–185 (MTMTLHTKAS…AMESAKETRY (185 aa)). The O-linked (GlcNAc) serine glycan is linked to Ser10. The required for interaction with NCOA1 stretch occupies residues 36–48 (ERPLGEVYMDSSK). The interaction with DDX5; self-association stretch occupies residues 36-175 (ERPLGEVYMD…LASTSDKGSM (140 aa)). 2 positions are modified to phosphoserine; by CDK2: Ser104 and Ser106. Ser119 carries the phosphoserine modification. Residues 144 to 175 (EAGPPAYYRPNSDNRRQGGRERLASTSDKGSM) form a disordered region. Over residues 155-166 (SDNRRQGGRERL) the composition is skewed to basic and acidic residues. Ser168 is subject to Phosphoserine; by CK2. 2 consecutive NR C4-type zinc fingers follow at residues 186–206 (CAVCNDYASGYHYGVWSCEGC) and 222–246 (CPATNQCTIDKNRRKSCQACRLRKC). Residues 186–251 (CAVCNDYASG…RLRKCYEVGM (66 aa)) constitute a DNA-binding region (nuclear receptor). Residues 186–311 (CAVCNDYASG…TKKNSPVLSL (126 aa)) form a mediates interaction with DNTTIP2 region. The hinge stretch occupies residues 252-311 (MKGGIRKDRRGGRMLKHKRQRDDGEGRNEAVPSGDMRAANLWPSPIMIKHTKKNSPVLSL). Residues 259–270 (DRRGGRMLKHKR) are compositionally biased toward basic residues. A disordered region spans residues 259–285 (DRRGGRMLKHKRQRDDGEGRNEAVPSG). An Asymmetric dimethylarginine; by PRMT1 modification is found at Arg261. An interaction with AKAP13 region spans residues 263–596 (GRMLKHKRQR…GEAENFPSTV (334 aa)). A self-association region spans residues 265–595 (MLKHKRQRDD…TGEAENFPST (331 aa)). The 237-residue stretch at 312 to 548 (TADQMISALL…DLLLEMLDAH (237 aa)) folds into the NR LBD domain. The tract at residues 312–595 (TADQMISALL…TGEAENFPST (284 aa)) is transactivation AF-2. The 17beta-estradiol site is built by Glu354 and Arg395. The S-palmitoyl cysteine moiety is linked to residue Cys448. His525 provides a ligand contact to 17beta-estradiol. Residue Tyr538 is modified to Phosphotyrosine; by Tyr-kinases. An O-linked (GlcNAc) threonine glycan is attached at Thr572.

Belongs to the nuclear hormone receptor family. NR3 subfamily. As to quaternary structure, binds DNA as a homodimer. Can form a heterodimer with ESR2. Interacts with coactivator NCOA5. Interacts with PELP1, the interaction is enhanced by 17-beta-estradiol; the interaction increases ESR1 transcriptional activity. Interacts with NCOA7; the interaction is ligand-inducible. Interacts with AKAP13, CUEDC2, HEXIM1, KDM5A, MAP1S, SMARD1, and UBE1C. Interacts with MUC1; the interaction is stimulated by 7 beta-estradiol (E2) and enhances ESR1-mediated transcription. Interacts with DNTTIP2, and UIMC1. Interacts with KMT2D/MLL2. Interacts with ATAD2; the interaction is enhanced by estradiol. Interacts with KIF18A and LDB1. Interacts with RLIM (via its C-terminus). Interacts with MACROD1. Interacts with SH2D4A and PLCG. Interacts with SH2D4A; the interaction blocks binding to PLCG and inhibits estrogen-induced cell proliferation. Interacts with DYNLL1. Interacts with CCDC62; the interaction requires estradiol and appears to enhance the transcription of target genes. Interacts with NR2C1; the interaction prevents homodimerization of ESR1 and suppresses its transcriptional activity and cell growth. Interacts with DNAAF4. Interacts with PRMT2. Interacts with RBFOX2. Interacts with EP300; the interaction is estrogen-dependent and enhanced by CITED1. Interacts with CITED1; the interaction is estrogen-dependent. Interacts with FAM120B, FOXL2, PHB2 and SLC30A9. Interacts with coactivators NCOA3 and NCOA6. Interacts with STK3/MST2 only in the presence of SAV1 and vice-versa. Binds to CSNK1D. Interacts with NCOA2; NCOA2 can interact with ESR1 AF-1 and AF-2 domains simultaneously and mediate their transcriptional synergy. Interacts with DDX5. Interacts with NCOA1; the interaction seems to require a self-association of N-terminal and C-terminal regions. Interacts with ZNF366, DDX17, NFKB1, RELA, SP1 and SP3. Interacts with NRIP1. Interacts with GPER1; the interaction occurs in an estrogen-dependent manner. Interacts with CLOCK and the interaction is stimulated by estrogen. Interacts with TRIP4 (ufmylated); estrogen dependent. Interacts with LMTK3; the interaction phosphorylates ESR1 (in vitro) and protects it against proteasomal degradation. Interacts with CCAR2 (via N-terminus) in a ligand-independent manner. Interacts with ZFHX3. Interacts with SFR1 in a ligand-dependent and -independent manner. Interacts with DCAF13, LATS1 and DCAF1; regulates ESR1 ubiquitination and ubiquitin-mediated proteasomal degradation. Interacts (via DNA-binding domain) with POU4F2 (C-terminus); this interaction increases the estrogen receptor ESR1 transcriptional activity in a DNA- and ligand 17-beta-estradiol-independent manner. Interacts with ESRRB isoform 1. Interacts with UBE3A and WBP2. Interacts with GTF2B. Interacts with RBM39. In the absence of hormonal ligand, interacts with TACC1. Interacts with PI3KR1 or PI3KR2 and PTK2/FAK1. Interacts with SRC. Interacts with BAG1; the interaction is promoted in the absence of estradiol (17-beta-estradiol/E2). Interacts with and ubiquitinated by STUB1; the interaction is promoted in the absence of estradiol (17-beta-estradiol/E2). Interacts with NEDD8. Glycosylated; contains N-acetylglucosamine, probably O-linked. In terms of processing, ubiquitinated; regulated by LATS1 via DCAF1 it leads to ESR1 proteasomal degradation. Deubiquitinated by OTUB1. Ubiquitinated by STUB1/CHIP; in the CA1 hippocampal region following loss of endogenous circulating estradiol (17-beta-estradiol/E2). Ubiquitinated by UBR5, leading to its degradation: UBR5 specifically recognizes and binds ligand-bound ESR1 when it is not associated with coactivators (NCOAs). In presence of NCOAs, the UBR5-degron is not accessible, preventing its ubiquitination and degradation. Post-translationally, phosphorylated by cyclin A/CDK2 and CK1. Phosphorylation probably enhances transcriptional activity. Dephosphorylation at Ser-119 by PPP5C inhibits its transactivation activity. Phosphorylated by LMTK3 (in vitro). Palmitoylated at Cys-448 by ZDHHC7 and ZDHHC21. Palmitoylation is required for plasma membrane targeting and for rapid intracellular signaling via ERK and AKT kinases and cAMP generation, but not for signaling mediated by the nuclear hormone receptor. In terms of processing, dimethylated by PRMT1 at Arg-261. The methylation may favor cytoplasmic localization. Demethylated by JMJD6 at Arg-261.

Its subcellular location is the nucleus. It localises to the cytoplasm. The protein resides in the golgi apparatus. It is found in the cell membrane. Functionally, nuclear hormone receptor. The steroid hormones and their receptors are involved in the regulation of eukaryotic gene expression and affect cellular proliferation and differentiation in target tissues. Ligand-dependent nuclear transactivation involves either direct homodimer binding to a palindromic estrogen response element (ERE) sequence or association with other DNA-binding transcription factors, such as AP-1/c-Jun, c-Fos, ATF-2, Sp1 and Sp3, to mediate ERE-independent signaling. Ligand binding induces a conformational change allowing subsequent or combinatorial association with multiprotein coactivator complexes through LXXLL motifs of their respective components. Mutual transrepression occurs between the estrogen receptor (ER) and NF-kappa-B in a cell-type specific manner. Decreases NF-kappa-B DNA-binding activity and inhibits NF-kappa-B-mediated transcription from the IL6 promoter and displace RELA/p65 and associated coregulators from the promoter. Recruited to the NF-kappa-B response element of the CCL2 and IL8 promoters and can displace CREBBP. Present with NF-kappa-B components RELA/p65 and NFKB1/p50 on ERE sequences. Can also act synergistically with NF-kappa-B to activate transcription involving respective recruitment adjacent response elements; the function involves CREBBP. Can activate the transcriptional activity of TFF1. Also mediates membrane-initiated estrogen signaling involving various kinase cascades. Essential for MTA1-mediated transcriptional regulation of BRCA1 and BCAS3. Maintains neuronal survival in response to ischemic reperfusion injury when in the presence of circulating estradiol (17-beta-estradiol/E2). In Bos taurus (Bovine), this protein is Estrogen receptor (ESR1).